Consider the following 527-residue polypeptide: Peptide chain release factor 3 (527 aa).

The region spanning 9-278 (NKRRTFAIIS…GLTQWAPKPQ (270 aa)) is the tr-type G domain. GTP-binding positions include 18-25 (SHPDAGKT), 86-90 (DTPGH), and 140-143 (NKLD).

It belongs to the TRAFAC class translation factor GTPase superfamily. Classic translation factor GTPase family. PrfC subfamily.

The protein resides in the cytoplasm. Its function is as follows. Increases the formation of ribosomal termination complexes and stimulates activities of RF-1 and RF-2. It binds guanine nucleotides and has strong preference for UGA stop codons. It may interact directly with the ribosome. The stimulation of RF-1 and RF-2 is significantly reduced by GTP and GDP, but not by GMP. The chain is Peptide chain release factor 3 from Haemophilus influenzae (strain PittEE).